Here is a 419-residue protein sequence, read N- to C-terminus: Dimethylallyltryptophan synthase 1 (419 aa).

The L-tryptophan site is built by Phe-81, Met-82, and Glu-90. L-tyrosine is bound at residue Phe-81. (2E)-geranyl diphosphate contacts are provided by Arg-105, Lys-187, Tyr-189, Arg-251, Lys-253, and Tyr-255. Arg-105, Lys-187, Tyr-189, Arg-251, Lys-253, and Tyr-255 together coordinate dimethylallyl diphosphate. Arg-257 serves as a coordination point for L-tryptophan. Arg-257 is a binding site for L-tyrosine. Residues Lys-332 and Tyr-334 each contribute to the (2E)-geranyl diphosphate site. Residues Lys-332 and Tyr-334 each contribute to the dimethylallyl diphosphate site. Residue Tyr-389 coordinates L-tryptophan. An L-tyrosine-binding site is contributed by Tyr-389. Tyr-404 contacts (2E)-geranyl diphosphate.

It belongs to the tryptophan dimethylallyltransferase family.

It catalyses the reaction L-tyrosine + dimethylallyl diphosphate = 4-O-dimethylallyl-L-tyrosine + diphosphate. Functionally, dimethylallyltryptophan synthase; part of the DMATS1 gene cluster that mediates the biosynthesis of a reversely N-prenylated monomeric L-tryptophan (r-N-DMAT). DMATS1 catalyzes the reverse N-prenylation of L-Trp with DMAPP to yield N-dimethylallyl-L-tryptophan. DMATS1 exhibits unusually broad substrate specificity and can utilize geranyl diphosphate (GPP) or L-Tyr as an alternative prenyl donor or acceptor, respectively. Is able to catalyze both forward and reverse prenylation, i.e., at C1 or C3 of DMAPP; and it can catalyze C-N and C-O bond-forming reactions. The main product of the cluster is the reverse-N-dimethylallyl-L-tryptophan (r-N-DMAT) produced by the dimethylallyltryptophan synthase DMATS1 and it remains unclear whether this metabolite undergoes further modifications when silent gene clusters are activated. The acetylated form of r-N-DMAT, ac-r-N-DMAT, is also produced. The roles of the cytochrome P450 monooxygenase FFUJ_09176 and the methyltransferase FFUJ_09178 have still to be elucidated. The chain is Dimethylallyltryptophan synthase 1 from Gibberella fujikuroi (strain CBS 195.34 / IMI 58289 / NRRL A-6831) (Bakanae and foot rot disease fungus).